The primary structure comprises 89 residues: Small ribosomal subunit protein uS15 (89 aa).

The protein belongs to the universal ribosomal protein uS15 family. In terms of assembly, part of the 30S ribosomal subunit. Forms a bridge to the 50S subunit in the 70S ribosome, contacting the 23S rRNA.

One of the primary rRNA binding proteins, it binds directly to 16S rRNA where it helps nucleate assembly of the platform of the 30S subunit by binding and bridging several RNA helices of the 16S rRNA. Functionally, forms an intersubunit bridge (bridge B4) with the 23S rRNA of the 50S subunit in the ribosome. In Geobacillus thermodenitrificans (strain NG80-2), this protein is Small ribosomal subunit protein uS15.